Reading from the N-terminus, the 171-residue chain is Neudesin (171 aa).

Residues 1–30 form the signal peptide; sequence MARPAPWWWLRPLAALALALALVRVPSARA. Positions 43 to 128 constitute a Cytochrome b5 heme-binding domain; that stretch reads VRLFTEEELA…KELEALDDIF (86 aa). Position 135 is an N6-acetyllysine (K135). Positions 151 to 171 are disordered; the sequence is GSPNLDFKPEDQPHFDIKDEF. The span at 157–171 shows a compositional bias: basic and acidic residues; the sequence is FKPEDQPHFDIKDEF.

The protein belongs to the cytochrome b5 family. MAPR subfamily. Interacts with PINK1 and PARK7.

The protein resides in the secreted. It is found in the extracellular space. It localises to the mitochondrion. The protein localises to the endoplasmic reticulum. Acts as a neurotrophic factor in postnatal mature neurons enhancing neuronal survival. Promotes cell proliferation and neurogenesis in undifferentiated neural progenitor cells at the embryonic stage and inhibits differentiation of astrocytes. Its neurotrophic activity is exerted via MAPK1/ERK2, MAPK3/ERK1 and AKT1/AKT pathways. Neurotrophic activity is enhanced by binding to heme. Also acts as an anorexigenic neurotrophic factor that contributes to energy balance. This Rattus norvegicus (Rat) protein is Neudesin.